The following is a 251-amino-acid chain: Triosephosphate isomerase (251 aa).

Position 9–11 (9–11 (NWK)) interacts with substrate. The active-site Electrophile is the histidine 95. Residue glutamate 167 is the Proton acceptor of the active site. Substrate contacts are provided by residues glycine 173, serine 212, and 233–234 (GG).

It belongs to the triosephosphate isomerase family. As to quaternary structure, homodimer.

Its subcellular location is the cytoplasm. It catalyses the reaction D-glyceraldehyde 3-phosphate = dihydroxyacetone phosphate. It participates in carbohydrate biosynthesis; gluconeogenesis. The protein operates within carbohydrate degradation; glycolysis; D-glyceraldehyde 3-phosphate from glycerone phosphate: step 1/1. Involved in the gluconeogenesis. Catalyzes stereospecifically the conversion of dihydroxyacetone phosphate (DHAP) to D-glyceraldehyde-3-phosphate (G3P). This Ectopseudomonas mendocina (strain ymp) (Pseudomonas mendocina) protein is Triosephosphate isomerase.